Reading from the N-terminus, the 204-residue chain is N-(5'-phosphoribosyl)anthranilate isomerase (204 aa).

This sequence belongs to the TrpF family.

The catalysed reaction is N-(5-phospho-beta-D-ribosyl)anthranilate = 1-(2-carboxyphenylamino)-1-deoxy-D-ribulose 5-phosphate. The protein operates within amino-acid biosynthesis; L-tryptophan biosynthesis; L-tryptophan from chorismate: step 3/5. This Bacillus cereus (strain AH187) protein is N-(5'-phosphoribosyl)anthranilate isomerase.